The following is a 593-amino-acid chain: DEAD-box ATP-dependent RNA helicase 18 (593 aa).

The Q motif signature appears at 16–44; it reads FSDLEPPLSGDIIEALNQSDFEFCTPVQA. Positions 47–226 constitute a Helicase ATP-binding domain; sequence IPLLCSYKDV…KAGLRNPVRV (180 aa). 60–67 serves as a coordination point for ATP; it reads AATGSGKT. The short motif at 174 to 177 is the DEAD box element; the sequence is DEAD. A Helicase C-terminal domain is found at 264–411; that stretch reads QLVDLLIKNS…ERKCSEDASD (148 aa). Residues 506–524 are compositionally biased toward basic and acidic residues; sequence QRQQNLQVRKEKRQEEKKE. The tract at residues 506-561 is disordered; sequence QRQQNLQVRKEKRQEEKKEKGKRKRVDASASNDPKKASRKLTGKQRQTIQTAEDEE.

Belongs to the DEAD box helicase family. DDX55/SPB4 subfamily.

It carries out the reaction ATP + H2O = ADP + phosphate + H(+). In Arabidopsis thaliana (Mouse-ear cress), this protein is DEAD-box ATP-dependent RNA helicase 18 (RH18).